A 1052-amino-acid polypeptide reads, in one-letter code: Mediator of RNA polymerase II transcription subunit 5 (1052 aa).

A disordered region spans residues 949 to 982; it reads GGDDEQREQHQQQQPDADQSNQGVVAPTGNTPGN. Low complexity predominate over residues 959–970; it reads QQQQPDADQSNQ.

Belongs to the Mediator complex subunit 5 family. Component of the Mediator complex.

It localises to the nucleus. Component of the Mediator complex, a coactivator involved in the regulated transcription of nearly all RNA polymerase II-dependent genes. Mediator functions as a bridge to convey information from gene-specific regulatory proteins to the basal RNA polymerase II transcription machinery. Mediator is recruited to promoters by direct interactions with regulatory proteins and serves as a scaffold for the assembly of a functional preinitiation complex with RNA polymerase II and the general transcription factors. The polypeptide is Mediator of RNA polymerase II transcription subunit 5 (NUT1) (Coccidioides immitis (strain RS) (Valley fever fungus)).